The chain runs to 118 residues: Protein 5.3 (118 aa).

This is Protein 5.3 from Escherichia phage T7 (Bacteriophage T7).